The following is a 424-amino-acid chain: MKLEMICTGEEVLAGQIVDTNAAWFANTLIERGVECQRRITVGDRLEDLVAVFKERSTEADVIMVNGGLGPTSDDLSTEAMALALGVPLVENKEWRSKLEAWFAKNARVMAESNLKQALLPQGAIMIDNPVGTACGFAIKLNQAWLFFTPGVPFEFKRMVKEQFIPFIEEHFPLSEPVSVKKLLTLGHGESALADKLEVIPLPKGVTLGYRSYMPYIEIKLFARGQLAIDSLATIETEVKKILGHSVVAEDITTLDQEIHNSLVNSGFSLSVAESCTGGLIASGLVAFAGSSAYLHQGLVTYSNEAKVKVLGVNPQTLDDYGAVSIATVEEMAKGARGILDSDYALATSGIAGPDGGSDEKPVGTVAIALATKYGVYSQMLKLPSRSRALVRSLGTAIAYDMLRRELLGEAVIVDYSSFSRFSK.

The protein belongs to the CinA family.

The chain is CinA-like protein from Shewanella woodyi (strain ATCC 51908 / MS32).